The following is a 137-amino-acid chain: Histone H2B (137 aa).

Positions 1-10 (MPPKAADKKP) are enriched in basic and acidic residues. The disordered stretch occupies residues 1–45 (MPPKAADKKPASKAPATASKAPEKKDAGKKTAASGDKKKRTKTRK). N6-acetyllysine; alternate is present on residues Lys-8 and Lys-9. Residues Lys-8 and Lys-9 each participate in a glycyl lysine isopeptide (Lys-Gly) (interchain with G-Cter in SUMO); alternate cross-link. At Ser-12 the chain carries Phosphoserine. Position 13 is an N6-acetyllysine (Lys-13). Lys-24 carries the post-translational modification N6-acetyllysine; alternate. Residue Lys-24 forms a Glycyl lysine isopeptide (Lys-Gly) (interchain with G-Cter in SUMO); alternate linkage. Lys-25 participates in a covalent cross-link: Glycyl lysine isopeptide (Lys-Gly) (interchain with G-Cter in SUMO). A Glycyl lysine isopeptide (Lys-Gly) (interchain with G-Cter in ubiquitin) cross-link involves residue Lys-131.

Belongs to the histone H2B family. As to quaternary structure, the nucleosome is a histone octamer containing two molecules each of H2A, H2B, H3 and H4 assembled in one H3-H4 heterotetramer and two H2A-H2B heterodimers. The octamer wraps approximately 147 bp of DNA. In terms of processing, monoubiquitinated by the UBC2-BRE1 complex to form H2BK123ub1. H2BK123ub1 gives a specific tag for epigenetic transcriptional activation and is also prerequisite for H3K4me and H3K79me formation. H2BK123ub1 also modulates the formation of double-strand breaks during meiosis and is a prerequisite for DNA-damage checkpoint activation. Post-translationally, phosphorylated by STE20 to form H2BS10ph during progression through meiotic prophase. May be correlated with chromosome condensation. Acetylated by GCN5 to form H2BK11ac and H2BK16ac. H2BK16ac can also be formed by ESA1. Acetylation of N-terminal lysines and particularly formation of H2BK11acK16ac has a positive effect on transcription. In terms of processing, sumoylation to form H2BK6su or H2BK7su, and probably also H2BK16su or H2BK17su, occurs preferentially near the telomeres and represses gene transcription.

The protein localises to the nucleus. Its subcellular location is the chromosome. Core component of nucleosome. Nucleosomes wrap and compact DNA into chromatin, limiting DNA accessibility to the cellular machineries which require DNA as a template. Histones thereby play a central role in transcription regulation, DNA repair, DNA replication and chromosomal stability. DNA accessibility is regulated via a complex set of post-translational modifications of histones, also called histone code, and nucleosome remodeling. The sequence is that of Histone H2B (HTB1) from Pyricularia oryzae (strain Y34) (Rice blast fungus).